We begin with the raw amino-acid sequence, 127 residues long: Riboflavin kinase (127 aa).

10 to 15 provides a ligand contact to CDP; it reads GLGEGR. 2 residues coordinate Mg(2+): Thr-39 and Asn-41. Residues Thr-96 and Glu-104 each contribute to the FMN site. A CDP-binding site is contributed by 109–112; sequence IQLR.

It belongs to the archaeal riboflavin kinase family. It depends on Mg(2+) as a cofactor.

The catalysed reaction is riboflavin + CTP = CDP + FMN + H(+). It participates in cofactor biosynthesis; FMN biosynthesis; FMN from riboflavin (CTP route): step 1/1. Functionally, catalyzes the CTP-dependent phosphorylation of riboflavin (vitamin B2) to form flavin mononucleotide (FMN). The polypeptide is Riboflavin kinase (Methanococcus maripaludis (strain C5 / ATCC BAA-1333)).